An 851-amino-acid chain; its full sequence is Envelope glycoprotein gp160 (851 aa).

The signal sequence occupies residues 1 to 31 (MRAREIQRNWQHLGKRGILFLGILIICSAAN). Over 32-679 (NLWVTVYYGV…ISNWLWYIKI (648 aa)) the chain is Extracellular. The cysteines at positions 53 and 73 are disulfide-linked. N-linked (GlcNAc...) asparagine; by host glycans are attached at residues Asn-87, Asn-132, Asn-136, Asn-143, Asn-148, Asn-159, Asn-163, Asn-193, Asn-205, Asn-238, Asn-242, Asn-249, Asn-270, Asn-303, Asn-309, Asn-339, Asn-346, and Asn-361. Disulfide bonds link Cys-118/Cys-213, Cys-125/Cys-204, Cys-130/Cys-160, Cys-226/Cys-255, and Cys-236/Cys-247. Residues 130 to 159 (CTNVTNNRTNANKNDTNINATVTSTDEIKN) form a V1 region. The interval 160 to 204 (CSFNITTELKDKKKRVSALFYKLDIVQIKQSEINQSESEDRLINC) is V2. Residues 304–337 (CTRPSNNTRKSIHIGPGRAFYATGDIIGDIRQAH) form a V3 region. Residues Cys-304 and Cys-338 are joined by a disulfide bond. The segment at 369-379 (SSGGDPQVTRH) is CD4-binding loop. 2 disulfide bridges follow: Cys-383-Cys-438 and Cys-390-Cys-411. A V4 region spans residues 390–411 (CDTTDTVDDTEEEEDTTITIPC). Asn-435, Asn-441, and Asn-455 each carry an N-linked (GlcNAc...) asparagine; by host glycan. Residues 449–469 (RDGGNDNNTRTEETFRPGGGD) form a disordered region. V5 regions lie at residues 454-466 (DNNTRTEETFRPG) and 456-466 (NTRTEETFRPG). A compositionally biased stretch (basic and acidic residues) spans 457–469 (TRTEETFRPGGGD). The tract at residues 507 to 527 (AVGIGALFLGFLGAAGSTMGA) is fusion peptide. Positions 569 to 587 (KQLRARVLAVERYLRDQQL) are immunosuppression. An intrachain disulfide couples Cys-593 to Cys-599. N-linked (GlcNAc...) asparagine; by host glycans are attached at residues Asn-606, Asn-611, Asn-620, and Asn-632. Residues 628–662 (KEISNHTSTIYRLIEESQIQQEKNEQDLLALDKWA) adopt a coiled-coil conformation. The interval 657-678 (ALDKWASLWNWFDISNWLWYIK) is MPER; binding to GalCer. Residues 680-700 (FIMIVGGLIGLRIVFTVLSVV) form a helical membrane-spanning segment. Residues 701-851 (NRVRQGYSPL…IRQGFERLLL (151 aa)) are Cytoplasmic-facing. Residues 707 to 710 (YSPL) carry the YXXL motif; contains endocytosis signal motif. Positions 713 to 737 (QTLTPSPRGPDRPEGIEEGGGEQDK) are disordered. A lipid anchor (S-palmitoyl cysteine; by host) is attached at Cys-759. The Di-leucine internalization motif motif lies at 850–851 (LL).

Belongs to the HIV-1 env protein family. As to quaternary structure, the mature envelope protein (Env) consists of a homotrimer of non-covalently associated gp120-gp41 heterodimers. The resulting complex protrudes from the virus surface as a spike. There seems to be as few as 10 spikes on the average virion. Interacts with host CD4, CCR5 and CXCR4. Gp120 also interacts with the C-type lectins CD209/DC-SIGN and CLEC4M/DC-SIGNR (collectively referred to as DC-SIGN(R)). Gp120 and gp41 interact with GalCer. Gp120 interacts with host ITGA4/ITGB7 complex; on CD4+ T-cells, this interaction results in rapid activation of integrin ITGAL/LFA-1, which facilitates efficient cell-to-cell spreading of HIV-1. Gp120 interacts with cell-associated heparan sulfate; this interaction increases virus infectivity on permissive cells and may be involved in infection of CD4- cells. The mature envelope protein (Env) consists of a homotrimer of non-covalently associated gp120-gp41 heterodimers. The resulting complex protrudes from the virus surface as a spike. There seems to be as few as 10 spikes on the average virion. Post-translationally, highly glycosylated by host. The high number of glycan on the protein is reffered to as 'glycan shield' because it contributes to hide protein sequence from adaptive immune system. In terms of processing, palmitoylation of the transmembrane protein and of Env polyprotein (prior to its proteolytic cleavage) is essential for their association with host cell membrane lipid rafts. Palmitoylation is therefore required for envelope trafficking to classical lipid rafts, but not for viral replication. Specific enzymatic cleavages in vivo yield mature proteins. Envelope glycoproteins are synthesized as an inactive precursor that is heavily N-glycosylated and processed likely by host cell furin in the Golgi to yield the mature SU and TM proteins. The cleavage site between SU and TM requires the minimal sequence [KR]-X-[KR]-R. About 2 of the 9 disulfide bonds of gp41 are reduced by P4HB/PDI, following binding to CD4 receptor.

It localises to the virion membrane. It is found in the host cell membrane. The protein localises to the host endosome membrane. In terms of biological role, oligomerizes in the host endoplasmic reticulum into predominantly trimers. In a second time, gp160 transits in the host Golgi, where glycosylation is completed. The precursor is then proteolytically cleaved in the trans-Golgi and thereby activated by cellular furin or furin-like proteases to produce gp120 and gp41. Attaches the virus to the host lymphoid cell by binding to the primary receptor CD4. This interaction induces a structural rearrangement creating a high affinity binding site for a chemokine coreceptor like CXCR4 and/or CCR5. Acts as a ligand for CD209/DC-SIGN and CLEC4M/DC-SIGNR, which are respectively found on dendritic cells (DCs), and on endothelial cells of liver sinusoids and lymph node sinuses. These interactions allow capture of viral particles at mucosal surfaces by these cells and subsequent transmission to permissive cells. HIV subverts the migration properties of dendritic cells to gain access to CD4+ T-cells in lymph nodes. Virus transmission to permissive T-cells occurs either in trans (without DCs infection, through viral capture and transmission), or in cis (following DCs productive infection, through the usual CD4-gp120 interaction), thereby inducing a robust infection. In trans infection, bound virions remain infectious over days and it is proposed that they are not degraded, but protected in non-lysosomal acidic organelles within the DCs close to the cell membrane thus contributing to the viral infectious potential during DCs' migration from the periphery to the lymphoid tissues. On arrival at lymphoid tissues, intact virions recycle back to DCs' cell surface allowing virus transmission to CD4+ T-cells. Functionally, acts as a class I viral fusion protein. Under the current model, the protein has at least 3 conformational states: pre-fusion native state, pre-hairpin intermediate state, and post-fusion hairpin state. During fusion of viral and target intracellular membranes, the coiled coil regions (heptad repeats) assume a trimer-of-hairpins structure, positioning the fusion peptide in close proximity to the C-terminal region of the ectodomain. The formation of this structure appears to drive apposition and subsequent fusion of viral and target cell membranes. Complete fusion occurs in host cell endosomes and is dynamin-dependent, however some lipid transfer might occur at the plasma membrane. The virus undergoes clathrin-dependent internalization long before endosomal fusion, thus minimizing the surface exposure of conserved viral epitopes during fusion and reducing the efficacy of inhibitors targeting these epitopes. Membranes fusion leads to delivery of the nucleocapsid into the cytoplasm. This chain is Envelope glycoprotein gp160, found in Homo sapiens (Human).